A 374-amino-acid chain; its full sequence is DNA/RNA-binding protein ALBA4 (374 aa).

Belongs to the histone-like Alba family.

The protein resides in the cytoplasm. The protein localises to the cell cortex. It localises to the perinuclear region. Its function is as follows. Possesses DNA- and RNA-binding activities. Binds to DNA with relaxed sequence specificity. May associate with the subtelomeric TARE6 repeats. Regulates the abundance of transcript sub-populations in a stage-specific manner. Regulates activation of male gametocytes. Participates in the coordination of sporozoite development in the oocyst. This chain is DNA/RNA-binding protein ALBA4, found in Plasmodium yoelii yoelii.